Reading from the N-terminus, the 342-residue chain is Isopentenyl-diphosphate delta-isomerase (342 aa).

11–12 provides a ligand contact to substrate; the sequence is RK. Residues S68, 69 to 71, S99, and N128 contribute to the FMN site; that span reads SMT. 99–101 is a substrate binding site; that stretch reads SQR. Q162 contributes to the substrate binding site. E163 provides a ligand contact to Mg(2+). FMN contacts are provided by residues K194, S219, T224, 275–277, and 296–297; these read GVR and AK.

Belongs to the IPP isomerase type 2 family. In terms of assembly, homooctamer. Dimer of tetramers. The cofactor is FMN. It depends on NADPH as a cofactor. Mg(2+) serves as cofactor.

The protein localises to the cytoplasm. The enzyme catalyses isopentenyl diphosphate = dimethylallyl diphosphate. Its function is as follows. Involved in the biosynthesis of isoprenoids. Catalyzes the 1,3-allylic rearrangement of the homoallylic substrate isopentenyl (IPP) to its allylic isomer, dimethylallyl diphosphate (DMAPP). The chain is Isopentenyl-diphosphate delta-isomerase from Legionella pneumophila (strain Paris).